The chain runs to 295 residues: Protoheme IX farnesyltransferase (295 aa).

The Cytoplasmic portion of the chain corresponds to 1-9 (MSVKHFIQI). Residues 10–28 (TKPGIIFGNVLSVAGGFFL) form a helical membrane-spanning segment. Over 29–37 (ASKGHVDFA) the chain is Periplasmic. A helical transmembrane segment spans residues 38–56 (LFLAVVIGTSLVVASGCVF). Over 57-78 (NNCIDRDIDHKMERTKNRVMVQ) the chain is Cytoplasmic. A helical transmembrane segment spans residues 79–97 (GGMSLPLALIYATLLGVAG). At 98-107 (FSLLYVQANP) the chain is on the periplasmic side. A helical transmembrane segment spans residues 108–126 (LSAFCALIGFIVYVGFYSL). Over 127 to 197 (WLKRKSVHGT…YSAANIPVLP (71 aa)) the chain is Cytoplasmic. Residues 198-216 (VARGILAAKKQIVLYVLAF) traverse the membrane as a helical segment. The Periplasmic portion of the chain corresponds to 217 to 228 (VLATLMLTLGGY). The helical transmembrane segment at 229-247 (AGLGYLAVAAAMGLYWLYM) threads the bilayer. Residues 248–268 (AWGGYKAEDDSKWARKVFGFS) are Cytoplasmic-facing. Residues 269 to 287 (ILTVTALSVMMGVDSQTAA) form a helical membrane-spanning segment. At 288–295 (DVLMTYAR) the chain is on the periplasmic side.

This sequence belongs to the UbiA prenyltransferase family. Mg(2+) serves as cofactor. Requires Ca(2+) as cofactor.

Its subcellular location is the cell inner membrane. It catalyses the reaction heme b + (2E,6E)-farnesyl diphosphate + H2O = Fe(II)-heme o + diphosphate. Functionally, converts protoheme IX and farnesyl diphosphate to heme O. This chain is Protoheme IX farnesyltransferase (cyoE), found in Pseudomonas putida (Arthrobacter siderocapsulatus).